The following is a 366-amino-acid chain: tRNA/tmRNA (uracil-C(5))-methyltransferase (366 aa).

5 residues coordinate S-adenosyl-L-methionine: Gln-190, Tyr-218, Asn-223, Glu-239, and Asp-299. Cys-324 serves as the catalytic Nucleophile. The active-site Proton acceptor is Glu-358.

The protein belongs to the class I-like SAM-binding methyltransferase superfamily. RNA M5U methyltransferase family. TrmA subfamily.

It carries out the reaction uridine(54) in tRNA + S-adenosyl-L-methionine = 5-methyluridine(54) in tRNA + S-adenosyl-L-homocysteine + H(+). The catalysed reaction is uridine(341) in tmRNA + S-adenosyl-L-methionine = 5-methyluridine(341) in tmRNA + S-adenosyl-L-homocysteine + H(+). Its function is as follows. Dual-specificity methyltransferase that catalyzes the formation of 5-methyluridine at position 54 (m5U54) in all tRNAs, and that of position 341 (m5U341) in tmRNA (transfer-mRNA). This Escherichia coli O81 (strain ED1a) protein is tRNA/tmRNA (uracil-C(5))-methyltransferase.